A 382-amino-acid polypeptide reads, in one-letter code: MQKIVFIDRDGTLIAEPQPDQQVDSLAKLDFIPKAISAMRKIAEDTTYELVMVTNQDGLGTGSFPEDTFWPAHNKMMSTFAGENVNFAAVHIDRHFPHDNSSTRKPGVGMLTQYFEASYDLTNSFVIGDRLTDVQLAVNLGAKAILFMPPNGLAAVQSADVSGLTEAMKQAIVLQTGDWDEIYEFLRLPARTALVERNTKETQIRVELNLDGRGRADMHTGLGFFDHMLDQVAKHSGADLAIHVNGDLHIDEHHTIEDTALALGEAYRRALGDKRGISRYGFLLPMDEALAQVGIDFSGRPWLVWDAEFKREKIGDMPTEMFYHFFKSFSDTALCNLNIKVEGDNEHHKIEAIFKAFAKAIKMAVRRDINELDNLPSTKGVL.

A histidinol-phosphatase region spans residues 1-190 (MQKIVFIDRD…EIYEFLRLPA (190 aa)). Aspartate 8 functions as the Nucleophile in the catalytic mechanism. Mg(2+) is bound by residues aspartate 8, aspartate 10, and aspartate 129. Aspartate 10 serves as the catalytic Proton donor. The imidazoleglycerol-phosphate dehydratase stretch occupies residues 191-382 (RTALVERNTK…DNLPSTKGVL (192 aa)).

This sequence in the N-terminal section; belongs to the histidinol-phosphatase family. The protein in the C-terminal section; belongs to the imidazoleglycerol-phosphate dehydratase family. It depends on Mg(2+) as a cofactor.

It localises to the cytoplasm. It carries out the reaction D-erythro-1-(imidazol-4-yl)glycerol 3-phosphate = 3-(imidazol-4-yl)-2-oxopropyl phosphate + H2O. It catalyses the reaction L-histidinol phosphate + H2O = L-histidinol + phosphate. The protein operates within amino-acid biosynthesis; L-histidine biosynthesis; L-histidine from 5-phospho-alpha-D-ribose 1-diphosphate: step 6/9. It participates in amino-acid biosynthesis; L-histidine biosynthesis; L-histidine from 5-phospho-alpha-D-ribose 1-diphosphate: step 8/9. The chain is Histidine biosynthesis bifunctional protein HisB from Spirosoma linguale (strain ATCC 33905 / DSM 74 / LMG 10896 / Claus 1).